The following is a 533-amino-acid chain: Lysine--tRNA ligase 1 (533 aa).

The 'HIGH' region motif lies at 26–34 (PSGHIHIGN). A 'KMSKS' region motif is present at residues 272-276 (AMSSS).

The protein belongs to the class-I aminoacyl-tRNA synthetase family.

It is found in the cytoplasm. The enzyme catalyses tRNA(Lys) + L-lysine + ATP = L-lysyl-tRNA(Lys) + AMP + diphosphate. The chain is Lysine--tRNA ligase 1 from Methanosarcina acetivorans (strain ATCC 35395 / DSM 2834 / JCM 12185 / C2A).